The sequence spans 124 residues: MSPELYNIFYESHRGSWAILIILFLVSYFLIKAGKGKAGKILHMIVRLFFVIMLITGAGMLVYWQFAFLFIVKGVLAIVLIYAMEMLLTRTSKGTIGQQARIYWIVFITCLVLVALIGYNVISF.

The next 4 helical transmembrane spans lie at 15–35 (GSWAILIILFLVSYFLIKAGK), 40–60 (KILHMIVRLFFVIMLITGAGM), 61–81 (LVYWQFAFLFIVKGVLAIVLI), and 102–122 (IYWIVFITCLVLVALIGYNVI).

This sequence belongs to the UPF0344 family.

It is found in the cell membrane. The chain is UPF0344 protein BH2983 from Halalkalibacterium halodurans (strain ATCC BAA-125 / DSM 18197 / FERM 7344 / JCM 9153 / C-125) (Bacillus halodurans).